The chain runs to 242 residues: Trypsin-1 (242 aa).

Residues 1–15 form the signal peptide; it reads MISLVFVLLIGAAFA. A propeptide spans 16–20 (activation peptide); the sequence is TEDDK. One can recognise a Peptidase S1 domain in the interval 21–240; it reads IVGGYECKAY…FNDWLTSTMA (220 aa). 6 disulfide bridges follow: C27–C156, C45–C61, C129–C229, C136–C202, C167–C181, and C192–C216. H60 functions as the Charge relay system in the catalytic mechanism. The Ca(2+) site is built by E72, N74, V77, and E82. D104 (charge relay system) is an active-site residue. Residue S196 is the Charge relay system of the active site.

Belongs to the peptidase S1 family. Ca(2+) serves as cofactor.

It is found in the secreted. The protein resides in the extracellular space. It carries out the reaction Preferential cleavage: Arg-|-Xaa, Lys-|-Xaa.. The chain is Trypsin-1 from Salmo salar (Atlantic salmon).